A 194-amino-acid chain; its full sequence is Imidazoleglycerol-phosphate dehydratase (194 aa).

It belongs to the imidazoleglycerol-phosphate dehydratase family.

It is found in the cytoplasm. It catalyses the reaction D-erythro-1-(imidazol-4-yl)glycerol 3-phosphate = 3-(imidazol-4-yl)-2-oxopropyl phosphate + H2O. The protein operates within amino-acid biosynthesis; L-histidine biosynthesis; L-histidine from 5-phospho-alpha-D-ribose 1-diphosphate: step 6/9. The polypeptide is Imidazoleglycerol-phosphate dehydratase (Rubrobacter xylanophilus (strain DSM 9941 / JCM 11954 / NBRC 16129 / PRD-1)).